A 108-amino-acid polypeptide reads, in one-letter code: DNA-binding protein HBbu (108 aa).

It belongs to the bacterial histone-like protein family.

Functionally, histone-like DNA-binding protein which is capable of wrapping DNA to stabilize it, and thus to prevent its denaturation under extreme environmental conditions. The polypeptide is DNA-binding protein HBbu (hbb) (Borrelia andersonii (Borreliella andersonii)).